We begin with the raw amino-acid sequence, 37 residues long: Large ribosomal subunit protein bL36 (37 aa).

The protein belongs to the bacterial ribosomal protein bL36 family.

This chain is Large ribosomal subunit protein bL36, found in Cutibacterium acnes (strain DSM 16379 / KPA171202) (Propionibacterium acnes).